The chain runs to 286 residues: Deleted in azoospermia-like-B (286 aa).

The RRM domain maps to 33–114 (NTVFVGGIDI…PAIRKICTYV (82 aa)). In terms of domain architecture, DAZ spans 155–180 (ACPYPSSPPMAIQQIPVGCQQPGYFQ).

Belongs to the RRM DAZ family. In terms of assembly, interacts with the C-terminus of pabp1 and with epabp. Prior to oocyte maturation, found in a complex with epabp and pum2 proteins and spdy1 mRNA; pum2 dissociates from the complex during maturation.

Its subcellular location is the cytoplasm. RNA-binding protein that is required for primordial germ cell (PGC) differentiation and indirectly necessary for the migration of PGCs through the endoderm. May promote meiotic cell division during spermatogenesis. Shows a preference for G- and U-rich RNAs and probably binds the 3'-UTR of target mRNAs. Stimulates the initiation of translation of mRNAs through the recruitment of poly(A)-binding proteins (PABPs). The polypeptide is Deleted in azoospermia-like-B (dazl-b) (Xenopus laevis (African clawed frog)).